The following is a 165-amino-acid chain: 3-isopropylmalate dehydratase small subunit (165 aa).

The protein belongs to the LeuD family. LeuD type 2 subfamily. Heterodimer of LeuC and LeuD.

The catalysed reaction is (2R,3S)-3-isopropylmalate = (2S)-2-isopropylmalate. The protein operates within amino-acid biosynthesis; L-leucine biosynthesis; L-leucine from 3-methyl-2-oxobutanoate: step 2/4. Functionally, catalyzes the isomerization between 2-isopropylmalate and 3-isopropylmalate, via the formation of 2-isopropylmaleate. The protein is 3-isopropylmalate dehydratase small subunit of Lachnoclostridium phytofermentans (strain ATCC 700394 / DSM 18823 / ISDg) (Clostridium phytofermentans).